The primary structure comprises 181 residues: METVDTVVWALWAMLPAYIPNNAAVLAGGGRPIDGGRTWGGRRVLGDGKTWRGTLIGTAAGTALALGLTQVTPSVSAALGTDLPTFSLRAGLGLAFGAMLGDIGASFLKRRTGRERGAAFPGLDQLDFVVGALLCAFVAAPSWFTETFTLPVLVVVVVATPVLHVVTNGIAYLLGLKNEPW.

5 helical membrane-spanning segments follow: residues 7–27, 55–75, 88–108, 126–146, and 147–167; these read VVWALWAMLPAYIPNNAAVLA, LIGTAAGTALALGLTQVTPSV, LRAGLGLAFGAMLGDIGASFL, LDFVVGALLCAFVAAPSWFTE, and TFTLPVLVVVVVATPVLHVVT.

It belongs to the CDP-archaeol synthase family. It depends on Mg(2+) as a cofactor.

It localises to the cell membrane. It catalyses the reaction 2,3-bis-O-(geranylgeranyl)-sn-glycerol 1-phosphate + CTP + H(+) = CDP-2,3-bis-O-(geranylgeranyl)-sn-glycerol + diphosphate. It functions in the pathway membrane lipid metabolism; glycerophospholipid metabolism. Catalyzes the formation of CDP-2,3-bis-(O-geranylgeranyl)-sn-glycerol (CDP-archaeol) from 2,3-bis-(O-geranylgeranyl)-sn-glycerol 1-phosphate (DGGGP) and CTP. This reaction is the third ether-bond-formation step in the biosynthesis of archaeal membrane lipids. The polypeptide is CDP-archaeol synthase (Haloarcula marismortui (strain ATCC 43049 / DSM 3752 / JCM 8966 / VKM B-1809) (Halobacterium marismortui)).